Here is a 314-residue protein sequence, read N- to C-terminus: Putative steroid dehydrogenase 1 (314 aa).

Position 47-76 (47-76 (ASWAVVTGATDGIGKSYSFELAKRGFNVYI)) interacts with NADP(+). Y202 is a catalytic residue.

It belongs to the short-chain dehydrogenases/reductases (SDR) family. 17-beta-HSD 3 subfamily.

The chain is Putative steroid dehydrogenase 1 (stdh-1) from Caenorhabditis elegans.